Consider the following 141-residue polypeptide: Globin, extracellular monomeric (141 aa).

The Globin domain occupies E1 to D141. Cysteines 2 and 131 form a disulfide. Residue H94 participates in heme b binding.

Belongs to the globin family. In terms of assembly, the giant hemoglobins of worms are formed of a monomeric subunit and a disulfide-bonded trimer. This subunit is monomeric.

It is found in the secreted. This is Globin, extracellular monomeric from Tubifex tubifex (Sludge worm).